Here is a 193-residue protein sequence, read N- to C-terminus: Pyridoxal 5'-phosphate synthase subunit PdxT (193 aa).

Residue 48–50 (GES) participates in L-glutamine binding. Cysteine 80 serves as the catalytic Nucleophile. L-glutamine contacts are provided by residues arginine 107 and 136–137 (IR). Residues histidine 172 and glutamate 174 each act as charge relay system in the active site.

Belongs to the glutaminase PdxT/SNO family. In terms of assembly, in the presence of PdxS, forms a dodecamer of heterodimers. Only shows activity in the heterodimer.

The enzyme catalyses aldehydo-D-ribose 5-phosphate + D-glyceraldehyde 3-phosphate + L-glutamine = pyridoxal 5'-phosphate + L-glutamate + phosphate + 3 H2O + H(+). It catalyses the reaction L-glutamine + H2O = L-glutamate + NH4(+). The protein operates within cofactor biosynthesis; pyridoxal 5'-phosphate biosynthesis. Catalyzes the hydrolysis of glutamine to glutamate and ammonia as part of the biosynthesis of pyridoxal 5'-phosphate. The resulting ammonia molecule is channeled to the active site of PdxS. The polypeptide is Pyridoxal 5'-phosphate synthase subunit PdxT (Clostridium botulinum (strain Loch Maree / Type A3)).